The primary structure comprises 210 residues: MEIILLERIEKLGGIGDVVTVKNGFARNYLLPNNKALRANEANRKLFEANRAKIEADNAERRSEAEGRAKDIDGKQIVLIRQASNTGQLYGSVSVRDIVDALAEDGVTGVTKSMVELERPIKSLGLVDVKVKLHPEVVVTVGVNVARSPDEAEMQSQGIDVIAAMFEEEQAEAAAAALEPDSEEEFEAATPPSELAAEASDEDADDAKEA.

Positions 172–210 (EAAAAALEPDSEEEFEAATPPSELAAEASDEDADDAKEA) are disordered. Residues 199 to 210 (ASDEDADDAKEA) show a composition bias toward acidic residues.

The protein belongs to the bacterial ribosomal protein bL9 family.

Its function is as follows. Binds to the 23S rRNA. The protein is Large ribosomal subunit protein bL9 of Sphingopyxis alaskensis (strain DSM 13593 / LMG 18877 / RB2256) (Sphingomonas alaskensis).